The sequence spans 426 residues: Histidinol dehydrogenase (426 aa).

The NAD(+) site is built by Tyr-123, Gln-185, and Asn-208. Substrate contacts are provided by Ser-231, Gln-253, and His-256. Residues Gln-253 and His-256 each contribute to the Zn(2+) site. Residues Glu-321 and His-322 each act as proton acceptor in the active site. 4 residues coordinate substrate: His-322, Asp-355, Glu-409, and His-414. Asp-355 is a Zn(2+) binding site. His-414 serves as a coordination point for Zn(2+).

The protein belongs to the histidinol dehydrogenase family. Zn(2+) is required as a cofactor.

The enzyme catalyses L-histidinol + 2 NAD(+) + H2O = L-histidine + 2 NADH + 3 H(+). It participates in amino-acid biosynthesis; L-histidine biosynthesis; L-histidine from 5-phospho-alpha-D-ribose 1-diphosphate: step 9/9. Functionally, catalyzes the sequential NAD-dependent oxidations of L-histidinol to L-histidinaldehyde and then to L-histidine. This is Histidinol dehydrogenase from Bacillus licheniformis (strain ATCC 14580 / DSM 13 / JCM 2505 / CCUG 7422 / NBRC 12200 / NCIMB 9375 / NCTC 10341 / NRRL NRS-1264 / Gibson 46).